A 211-amino-acid polypeptide reads, in one-letter code: ATP phosphoribosyltransferase (211 aa).

It belongs to the ATP phosphoribosyltransferase family. Short subfamily. As to quaternary structure, heteromultimer composed of HisG and HisZ subunits.

Its subcellular location is the cytoplasm. The catalysed reaction is 1-(5-phospho-beta-D-ribosyl)-ATP + diphosphate = 5-phospho-alpha-D-ribose 1-diphosphate + ATP. The protein operates within amino-acid biosynthesis; L-histidine biosynthesis; L-histidine from 5-phospho-alpha-D-ribose 1-diphosphate: step 1/9. Functionally, catalyzes the condensation of ATP and 5-phosphoribose 1-diphosphate to form N'-(5'-phosphoribosyl)-ATP (PR-ATP). Has a crucial role in the pathway because the rate of histidine biosynthesis seems to be controlled primarily by regulation of HisG enzymatic activity. The sequence is that of ATP phosphoribosyltransferase from Pseudomonas putida (strain ATCC 700007 / DSM 6899 / JCM 31910 / BCRC 17059 / LMG 24140 / F1).